Consider the following 337-residue polypeptide: Phenylalanine--tRNA ligase alpha subunit (337 aa).

Glu258 lines the Mg(2+) pocket.

The protein belongs to the class-II aminoacyl-tRNA synthetase family. Phe-tRNA synthetase alpha subunit type 1 subfamily. As to quaternary structure, tetramer of two alpha and two beta subunits. Mg(2+) is required as a cofactor.

It is found in the cytoplasm. The enzyme catalyses tRNA(Phe) + L-phenylalanine + ATP = L-phenylalanyl-tRNA(Phe) + AMP + diphosphate + H(+). This chain is Phenylalanine--tRNA ligase alpha subunit, found in Burkholderia cenocepacia (strain ATCC BAA-245 / DSM 16553 / LMG 16656 / NCTC 13227 / J2315 / CF5610) (Burkholderia cepacia (strain J2315)).